We begin with the raw amino-acid sequence, 718 residues long: Polyribonucleotide nucleotidyltransferase (718 aa).

Mg(2+) is bound by residues Asp487 and Asp493. Residues Pro554–Ile613 enclose the KH domain. Residues Gly623 to Lys691 form the S1 motif domain. The tract at residues Val692–Glu718 is disordered. The segment covering Leu701–Glu718 has biased composition (basic and acidic residues).

It belongs to the polyribonucleotide nucleotidyltransferase family. Mg(2+) serves as cofactor.

It is found in the cytoplasm. It catalyses the reaction RNA(n+1) + phosphate = RNA(n) + a ribonucleoside 5'-diphosphate. In terms of biological role, involved in mRNA degradation. Catalyzes the phosphorolysis of single-stranded polyribonucleotides processively in the 3'- to 5'-direction. This chain is Polyribonucleotide nucleotidyltransferase, found in Nitrobacter winogradskyi (strain ATCC 25391 / DSM 10237 / CIP 104748 / NCIMB 11846 / Nb-255).